Here is a 524-residue protein sequence, read N- to C-terminus: 2-isopropylmalate synthase (524 aa).

The Pyruvate carboxyltransferase domain maps to 12 to 274 (VIIFDTTLRD…WNRIETTMLT (263 aa)). Asp-21, His-209, His-211, and Asn-245 together coordinate Mn(2+). A regulatory domain region spans residues 398 to 524 (KLMSLTVIAG…EDAPTVAVAG (127 aa)).

The protein belongs to the alpha-IPM synthase/homocitrate synthase family. LeuA type 1 subfamily. In terms of assembly, homodimer. Mn(2+) is required as a cofactor.

Its subcellular location is the cytoplasm. It carries out the reaction 3-methyl-2-oxobutanoate + acetyl-CoA + H2O = (2S)-2-isopropylmalate + CoA + H(+). Its pathway is amino-acid biosynthesis; L-leucine biosynthesis; L-leucine from 3-methyl-2-oxobutanoate: step 1/4. Its function is as follows. Catalyzes the condensation of the acetyl group of acetyl-CoA with 3-methyl-2-oxobutanoate (2-ketoisovalerate) to form 3-carboxy-3-hydroxy-4-methylpentanoate (2-isopropylmalate). The protein is 2-isopropylmalate synthase of Rhodopseudomonas palustris (strain TIE-1).